Consider the following 96-residue polypeptide: Co-chaperonin GroES (96 aa).

This sequence belongs to the GroES chaperonin family. As to quaternary structure, heptamer of 7 subunits arranged in a ring. Interacts with the chaperonin GroEL.

It localises to the cytoplasm. In terms of biological role, together with the chaperonin GroEL, plays an essential role in assisting protein folding. The GroEL-GroES system forms a nano-cage that allows encapsulation of the non-native substrate proteins and provides a physical environment optimized to promote and accelerate protein folding. GroES binds to the apical surface of the GroEL ring, thereby capping the opening of the GroEL channel. This Geobacter sp. (strain M21) protein is Co-chaperonin GroES.